Consider the following 541-residue polypeptide: Putative asparagine synthetase [glutamine-hydrolyzing] 1 (541 aa).

Residue Cys-2 is the For GATase activity of the active site. Residues 2-213 (CSISGIIVKD…PNSQLIYYLD (212 aa)) form the Glutamine amidotransferase type-2 domain. Residues 68–72 (RLAIV), 92–94 (NGE), and Asp-116 contribute to the L-glutamine site. ATP-binding positions include Val-289 and 363–364 (SG).

The protein belongs to the asparagine synthetase family.

The enzyme catalyses L-aspartate + L-glutamine + ATP + H2O = L-asparagine + L-glutamate + AMP + diphosphate + H(+). It functions in the pathway amino-acid biosynthesis; L-asparagine biosynthesis; L-asparagine from L-aspartate (L-Gln route): step 1/1. This is Putative asparagine synthetase [glutamine-hydrolyzing] 1 from Methanocaldococcus jannaschii (strain ATCC 43067 / DSM 2661 / JAL-1 / JCM 10045 / NBRC 100440) (Methanococcus jannaschii).